A 664-amino-acid chain; its full sequence is E3 ubiquitin-protein ligase RNF139 (664 aa).

Position 2 is an N-acetylalanine (A2). The next 12 helical transmembrane spans lie at 51 to 71 (IVLQ…VLIL), 85 to 105 (AFLL…HIDF), 125 to 145 (SLWM…VTLL), 154 to 174 (LIIL…PLHI), 178 to 198 (LLFT…AVKL), 293 to 313 (GMSA…LAFI), 323 to 343 (LGFV…LSGL), 356 to 376 (MCLL…PVLM), 390 to 410 (FPVL…SYVL), 420 to 440 (LFAV…SLTV), 469 to 489 (SIIE…TMMF), and 495 to 512 (IRAF…YLQA). The RING-type; atypical zinc finger occupies 547-586 (CAICYHEFTTSARITPCNHYFHALCLRKWLYIQDTCPMCH). The segment at 601–664 (VSNNNGFIPP…AAEEFNDDTD (64 aa)) is disordered. Residues 616–628 (EAVREAAAESDRE) show a composition bias toward basic and acidic residues. The segment covering 629–639 (LNEDDSTDCDD) has biased composition (acidic residues). The residue at position 634 (S634) is a Phosphoserine. A phosphothreonine mark is found at T635 and T663.

In terms of assembly, interacts with MHC class I and HM13. Interacts with VHL. Component of SCAP-SREBP complex composed of SREBF2, SCAP and RNF139; the complex hampers the interaction between SCAP and SEC24B, thereby reducing SREBF2 proteolytic processing. Interacts with SREBF2 (via C-terminal domain). Interacts with SCAP; the interaction inhibits the interaction of SCAP with SEC24B and hampering the ER to Golgi transport of the SCAP-SREBP complex. Interacts with SEC24B. Interacts with INSIG1 and INSIG2. Interacts with EIF3F and EIF3H; the interaction leads to protein translation inhibitions in a ubiquitination-dependent manner. Interacts with XBP1 isoform 1; the interaction induces ubiquitination and degradation of XBP1 isoform 1. Interacts with AUP1, AMFR and UBE2G2; interaction with AUP1 facilitates interaction of RNF139 with ubiquitin-conjugating enzyme UBE2G2 and ubiquitin ligase AMFR/gp78, leading to sterol-induced ubiquitination of HMGCR and its subsequent proteasomal degradation. Post-translationally, autoubiquitinated. Ubiquitination is induced by sterol and leads to ist degradation via the ubiquitin-proteasome pathway. In terms of tissue distribution, highly expressed in testis, placenta and adrenal gland. Moderate expression in heart, brain, liver, skeletal muscle and pancreas, and low expression in lung and kidney.

It is found in the endoplasmic reticulum membrane. It carries out the reaction S-ubiquitinyl-[E2 ubiquitin-conjugating enzyme]-L-cysteine + [acceptor protein]-L-lysine = [E2 ubiquitin-conjugating enzyme]-L-cysteine + N(6)-ubiquitinyl-[acceptor protein]-L-lysine.. It functions in the pathway protein modification; protein ubiquitination. Its function is as follows. E3-ubiquitin ligase; acts as a negative regulator of cell proliferation through mechanisms involving G2/M arrest and cell death. Required for MHC class I ubiquitination in cells expressing the cytomegalovirus protein US2 before dislocation from the endoplasmic reticulum (ER). Affects SREBP processing by hindering the SREBP-SCAP complex translocation from the ER to the Golgi, thereby reducing SREBF2 target gene expression. Involved in the sterol-accelerated degradation of HMGCR. This is achieved through binding of RNF139 to INSIG1 and/or INSIG2 at the ER membrane. In addition, interaction of RNF139 with AUP1 facilitates interaction of RNF139 with ubiquitin-conjugating enzyme UBE2G2 and ubiquitin ligase AMFR, leading to ubiquitination of HMGCR. The ubiquitinated HMGCR is then released from the ER into the cytosol for subsequent destruction. Required for INSIG1 ubiquitination. May be required for EIF3 complex ubiquitination. The sequence is that of E3 ubiquitin-protein ligase RNF139 from Homo sapiens (Human).